Reading from the N-terminus, the 140-residue chain is Type II secretion system core protein G (140 aa).

Residues M1 to G6 constitute a propeptide, leader sequence. F7 is modified (N-methylphenylalanine). A helical transmembrane segment spans residues F7 to V27. Residues L120 to K140 form a disordered region.

Belongs to the GSP G family. As to quaternary structure, type II secretion system is composed of four main components: the outer membrane complex, the inner membrane complex, the cytoplasmic secretion ATPase and the periplasm-spanning pseudopilus. Forms homomultimers. Post-translationally, cleaved by the prepilin peptidase. Methylated by prepilin peptidase at the amino group of the N-terminal phenylalanine once the leader sequence is cleaved.

The protein localises to the cell inner membrane. Core component of the type II secretion system required for the energy-dependent secretion of extracellular factors such as proteases and toxins from the periplasm. Pseudopilin (pilin-like) protein that polymerizes to form the pseudopilus. Further polymerization triggers pseudopilus growth. The polypeptide is Type II secretion system core protein G (pulG) (Klebsiella pneumoniae).